The chain runs to 512 residues: Cytochrome P450 71BT1 (512 aa).

The signal sequence occupies residues 1-24; it reads MENLFIFLFALLLFCFMLLKLSKK. 2 N-linked (GlcNAc...) asparagine glycosylation sites follow: Asn111 and Asn168. Cys447 serves as a coordination point for heme.

Belongs to the cytochrome P450 family.

In Catharanthus roseus (Madagascar periwinkle), this protein is Cytochrome P450 71BT1.